We begin with the raw amino-acid sequence, 559 residues long: Transmembrane E3 ubiquitin-protein ligase FLY2 (559 aa).

The signal sequence occupies residues 1–29 (MNNLGNFGVWGFGFFSLSIWFAVLQQANG). Over 30–259 (LRPIRETARS…TSINVEVYYN (230 aa)) the chain is Lumenal. Residues 260–280 (KAVNYTLMVTFVSFLQVLLLI) form a helical membrane-spanning segment. The Cytoplasmic segment spans residues 281 to 294 (RQMEHSNTQSGAAK). The helical transmembrane segment at 295 to 315 (VSIVMIGQQAIMDSYLCLLHL) threads the bilayer. Residues 316-318 (TAG) are Lumenal-facing. A helical transmembrane segment spans residues 319–339 (ILVESLFNAFATAAFFKFVVF). The Cytoplasmic portion of the chain corresponds to 340-370 (SIFEMRYLLSIWKATRPSTSGEGWETMRREL). A helical membrane pass occupies residues 371–391 (SFLYSRFYGILLGGILLMYEF). The Lumenal portion of the chain corresponds to 392–394 (HNY). Residues 395–415 (MRPILLLMYSFWIPQIVANVV) form a helical membrane-spanning segment. The Cytoplasmic portion of the chain corresponds to 416–423 (RDSRKPLH). Residues 424-444 (PYYILGMTVTRLAIPLYVFGC) form a helical membrane-spanning segment. Topologically, residues 445-458 (PKNFMRVEPSKAWC) are lumenal. A helical transmembrane segment spans residues 459-479 (VSLCAFMGFQAGVLLLQHYFG). The Cytoplasmic portion of the chain corresponds to 480–559 (SRCFVPRKLL…PTCRRPLPPA (80 aa)). The RING-type; atypical zinc finger occupies 509–553 (CVICMTTIDLRHRINDCMVTPCEHIFHSGCLQRWMDIKMECPTCR).

In terms of tissue distribution, highly expressed in stems. Expressed in root xylem and seed coat.

The protein localises to the endomembrane system. It carries out the reaction S-ubiquitinyl-[E2 ubiquitin-conjugating enzyme]-L-cysteine + [acceptor protein]-L-lysine = [E2 ubiquitin-conjugating enzyme]-L-cysteine + N(6)-ubiquitinyl-[acceptor protein]-L-lysine.. It participates in protein modification; protein ubiquitination. Functionally, E3 ubiquitin-protein ligase that may be involved in xylem development. This chain is Transmembrane E3 ubiquitin-protein ligase FLY2, found in Arabidopsis thaliana (Mouse-ear cress).